The following is a 504-amino-acid chain: Sugar transport protein 14 (504 aa).

At M1–Y25 the chain is on the cytoplasmic side. 12 consecutive transmembrane segments (helical) span residues F26–V46, I84–S104, V121–L141, I144–M164, G171–I191, L205–P225, L286–Y308, S315–A337, F352–L372, L382–G402, V428–L448, and G454–L474. The Cytoplasmic segment spans residues P475–E504.

It belongs to the major facilitator superfamily. Sugar transporter (TC 2.A.1.1) family.

It localises to the membrane. Its function is as follows. Mediates an active uptake of hexoses, probably by sugar/hydrogen symport. This chain is Sugar transport protein 14 (STP14), found in Arabidopsis thaliana (Mouse-ear cress).